A 279-amino-acid polypeptide reads, in one-letter code: Thioredoxin-like 1-1, chloroplastic (279 aa).

The region spanning 56–202 is the Thioredoxin domain; it reads ALTERKARPL…FKDALAKHGP (147 aa). Active-site nucleophile residues include Cys-125 and Cys-128. Cysteines 125 and 128 form a disulfide.

Belongs to the thioredoxin family.

Functionally, probable thiol-disulfide oxidoreductase that may participate in various redox reactions. The sequence is that of Thioredoxin-like 1-1, chloroplastic from Oryza sativa subsp. japonica (Rice).